Here is a 337-residue protein sequence, read N- to C-terminus: Inner membrane protein YhjD (337 aa).

Positions 1 to 29 (MTQENEIKRPIQDLEHEPIKPLDNSEKGS) are enriched in basic and acidic residues. Positions 1-31 (MTQENEIKRPIQDLEHEPIKPLDNSEKGSKV) are disordered. Over 1–74 (MTQENEIKRP…LGNQFGAAIT (74 aa)) the chain is Cytoplasmic. Residues 75–97 (YFSFLSMIPILMVSFAAGGFVLA) traverse the membrane as a helical segment. At 98-133 (SHPMLLQDIFDKILQNISDPTLAATLKNTINTAVQQ) the chain is on the periplasmic side. A helical transmembrane segment spans residues 134–156 (RTTVGLVGLAVALYSGINWMGNL). The Cytoplasmic portion of the chain corresponds to 157 to 185 (REAIRAQSRDVWERSPQDQEKFWVKYLRD). The helical transmembrane segment at 186–208 (FISLIGLLIALIVTLSITSVAGS) threads the bilayer. The Periplasmic segment spans residues 209 to 227 (AQQMIISALHLNSIEWLKP). Residues 228-250 (TWRLIGLAISIFANYLLFFWIFW) traverse the membrane as a helical segment. The Cytoplasmic portion of the chain corresponds to 251–261 (RLPRHRPRKKA). A helical membrane pass occupies residues 262–284 (LIRGTFLAAIGFEVIKIVMTYTL). The Periplasmic segment spans residues 285–298 (PSLMKSPSGAAFGS). The chain crosses the membrane as a helical span at residues 299–321 (VLGLMAFFYFFARLTLFCAAWIA). Residues 322 to 337 (TAEYKDDPRMPGKTQP) lie on the Cytoplasmic side of the membrane.

It is found in the cell inner membrane. The polypeptide is Inner membrane protein YhjD (yhjD) (Escherichia coli (strain K12)).